The sequence spans 397 residues: Putative serine/threonine-protein kinase R301 (397 aa).

Residues 25 to 397 (QIKSTSVGSG…IIRHFNSPRL (373 aa)) enclose the Protein kinase domain. ATP contacts are provided by residues 31-39 (VGSGGSDNI) and K53. The active-site Proton acceptor is D218.

This sequence belongs to the protein kinase superfamily. Ser/Thr protein kinase family.

It is found in the virion. The catalysed reaction is L-seryl-[protein] + ATP = O-phospho-L-seryl-[protein] + ADP + H(+). It catalyses the reaction L-threonyl-[protein] + ATP = O-phospho-L-threonyl-[protein] + ADP + H(+). This chain is Putative serine/threonine-protein kinase R301, found in Acanthamoeba polyphaga (Amoeba).